Here is a 527-residue protein sequence, read N- to C-terminus: Eukaryotic translation initiation factor 4B1 (527 aa).

Disordered regions lie at residues 1–370 (MAKP…REVV) and 453–527 (FGQR…RQGW). Composition is skewed to low complexity over residues 35-45 (AAAGGAASFPS) and 74-85 (GAAGAPRRVAPA). Composition is skewed to basic and acidic residues over residues 102–155 (PRER…DNWG) and 181–194 (RSDD…DKKP). A Nuclear localization signal motif is present at residues 196 to 203 (PSRYPSLG). The span at 203 to 232 (GTGGGFRESSGGGFRESSGGGFRESSGGGF) shows a compositional bias: gly residues. Residues 293–317 (KPREEVLAEKGLDWRKMEGEIEKKT) show a composition bias toward basic and acidic residues. The segment covering 319-336 (RPTSSHSSRPNSAHSSRP) has biased composition (low complexity). 2 stretches are compositionally biased toward basic and acidic residues: residues 472-485 (EEPH…DRPR) and 496-510 (PVEE…RERG). Positions 518-527 (SDRSSTRQGW) are enriched in low complexity.

It belongs to the eIF-4 subunit B family. In terms of assembly, homodimer. Nonspherical monomer. mRNA-discriminating component of initiation complexes. In terms of processing, phosphorylated.

The protein resides in the nucleus. In terms of biological role, promotes the eIF4F and eIF4A RNA-dependent ATP-hydrolysis activity with different efficiency depending on mRNAs, thus providing mRNA discrimination during initiation of translation. The sequence is that of Eukaryotic translation initiation factor 4B1 from Triticum aestivum (Wheat).